A 376-amino-acid chain; its full sequence is Cellular tumor antigen p53 (376 aa).

The tract at residues 1 to 36 (MEGNGERDTMMVEPPDSQEFAELWLRNLIVRDNSLW) is transcription activation (acidic). A DNA-binding region spans residues 77–268 (DYPGLLNFTL…KTEESNFKKQ (192 aa)). Residues 150-159 (RCPHHERSND) show a composition bias toward basic and acidic residues. The disordered stretch occupies residues 150–171 (RCPHHERSNDSSDGPAPPGHLL). Positions 151, 154, 214, and 218 each coordinate Zn(2+). Positions 249–256 (RVCACPGR) are interaction with DNA. Basic and acidic residues-rich tracts occupy residues 257–270 (DRKT…KQQE) and 282–294 (SMKD…EASK). A disordered region spans residues 257–306 (DRKTEESNFKKQQEPKTSGKTLTKRSMKDPPSHPEASKKSKNSSSDDEIY). Positions 280–297 (KRSMKDPPSHPEASKKSK) match the Bipartite nuclear localization signal motif. Residues 303-334 (DEIYTLQVRGKERYEFLKKINDGLELSDVVPP) form an oligomerization region. A Nuclear export signal motif is present at residues 317 to 328 (EFLKKINDGLEL). Positions 342-376 (QKLLSKTCRKERDGAAGEPKRGKKRLVKEEKCDSD) are disordered. Residues 347–372 (KTCRKERDGAAGEPKRGKKRLVKEEK) form a basic (repression of DNA-binding) region. Positions 349–361 (CRKERDGAAGEPK) are enriched in basic and acidic residues.

This sequence belongs to the p53 family. In terms of assembly, binds DNA as a homotetramer. The cofactor is Zn(2+).

It localises to the cytoplasm. The protein resides in the nucleus. Its function is as follows. Multifunctional transcription factor that induces cell cycle arrest, DNA repair or apoptosis upon binding to its target DNA sequence. Acts as a tumor suppressor in many tumor types; induces growth arrest or apoptosis depending on the physiological circumstances and cell type. Negatively regulates cell division by controlling expression of a set of genes required for this process. One of the activated genes is an inhibitor of cyclin-dependent kinases. Apoptosis induction seems to be mediated either by stimulation of BAX and FAS antigen expression, or by repression of Bcl-2 expression. The sequence is that of Cellular tumor antigen p53 (tp53) from Ictalurus punctatus (Channel catfish).